A 428-amino-acid polypeptide reads, in one-letter code: MLESLTLQPIALVNGTVNLPGSKSVSNRALLLAALAEGTTQLNNVLDSDDIRHMLNALQALGVDFRLSADRTCCEVDGLGGKLVAEQPLSLFLGNAGTAMRPLAAVLCLGNSDIVLTGEPRMKERPIGHLVDALRQGGAQIDYLEQENYPPLRLRGGFRGGELTVDGRVSSQFLTALLMTAPLAEQDTTIRIMGDLVSKPYIDITLHLMKAFGIDVGHENYQIFHIKGGQTYRSPGTYLVEGDASSASYFLAAAAIKGGTVRVTGIGKKSVQGDTKFADVLEKMGAKVTWGDDYIECSRGELQGIDMDMNHIPDAAMTIATTALFATGPTTIRNIYNWRVKETDRLTAMATELRKVGAEVEEGEDYIRVVPPLQLTAADIGTYDDHRMAMCFSLVALSDTPVTILDPKCTAKTFPDYFEQFARLSQLA.

The 3-phosphoshikimate site is built by Lys-23, Ser-24, and Arg-28. Residue Lys-23 coordinates phosphoenolpyruvate. Residues Gly-97 and Arg-125 each coordinate phosphoenolpyruvate. Residues Ser-170, Ser-171, Gln-172, Ser-198, Asp-314, Asn-337, and Lys-341 each coordinate 3-phosphoshikimate. Gln-172 contributes to the phosphoenolpyruvate binding site. The active-site Proton acceptor is the Asp-314. Phosphoenolpyruvate-binding residues include Arg-345, Arg-387, and Lys-412.

The protein belongs to the EPSP synthase family. Monomer.

It is found in the cytoplasm. The enzyme catalyses 3-phosphoshikimate + phosphoenolpyruvate = 5-O-(1-carboxyvinyl)-3-phosphoshikimate + phosphate. It functions in the pathway metabolic intermediate biosynthesis; chorismate biosynthesis; chorismate from D-erythrose 4-phosphate and phosphoenolpyruvate: step 6/7. In terms of biological role, catalyzes the transfer of the enolpyruvyl moiety of phosphoenolpyruvate (PEP) to the 5-hydroxyl of shikimate-3-phosphate (S3P) to produce enolpyruvyl shikimate-3-phosphate and inorganic phosphate. This chain is 3-phosphoshikimate 1-carboxyvinyltransferase, found in Yersinia pestis bv. Antiqua (strain Antiqua).